We begin with the raw amino-acid sequence, 828 residues long: Zinc finger protein 438 (828 aa).

Disordered regions lie at residues 1–29, 143–173, and 193–231; these read MQNS…KGLQ, KSGC…LYKP, and ALTN…PAKQ. 2 stretches are compositionally biased toward polar residues: residues 16–29 and 150–159; these read NIPS…KGLQ and PAQTQMCPQM. 3 consecutive C2H2-type zinc fingers follow at residues 507–529, 535–557, and 567–590; these read HRCH…MNTH, YSCR…MKLH, and MCCE…KEVH. Residues 680 to 721 are disordered; sequence EGTFPGSKGTQEELVQHASPDWKRHPERGKPEKVHSSSEESH. Over residues 689–721 the composition is skewed to basic and acidic residues; sequence TQEELVQHASPDWKRHPERGKPEKVHSSSEESH. The segment at 776–799 adopts a C2H2-type 4 zinc-finger fold; sequence FNCLLCAEMLGRKEDLLHHWKHQH.

It belongs to the krueppel C2H2-type zinc-finger protein family. In terms of tissue distribution, ubiquitous.

It is found in the nucleus. Functionally, isoform 1 acts as a transcriptional repressor. This Homo sapiens (Human) protein is Zinc finger protein 438 (ZNF438).